The chain runs to 366 residues: Fructose-bisphosphate aldolase 2 (366 aa).

Arg-60 and Lys-150 together coordinate substrate. Residue Glu-191 is the Proton acceptor of the active site. Residue Lys-233 is the Schiff-base intermediate with dihydroxyacetone-P of the active site.

Belongs to the class I fructose-bisphosphate aldolase family.

It carries out the reaction beta-D-fructose 1,6-bisphosphate = D-glyceraldehyde 3-phosphate + dihydroxyacetone phosphate. It functions in the pathway carbohydrate degradation; glycolysis; D-glyceraldehyde 3-phosphate and glycerone phosphate from D-glucose: step 4/4. In Caenorhabditis elegans, this protein is Fructose-bisphosphate aldolase 2 (aldo-2).